The chain runs to 181 residues: CASP-like protein 2C1 (181 aa).

Topologically, residues 1–7 (MALEIPK) are cytoplasmic. Residues 8-28 (IEAILRGIAILLLVSTACLVG) traverse the membrane as a helical segment. Over 29-49 (LDSQTKFVIVYEKEVTYKDLH) the chain is Extracellular. Residues 50 to 70 (ALVVLVYVDAVAAAYNLLQLC) form a helical membrane-spanning segment. Residues 71–98 (RCSVSALSKGNFKGSYRYLSWACFVLDQ) are Cytoplasmic-facing. The helical transmembrane segment at 99–119 (LAAYTTFAAHSAALQHSVLGI) threads the bilayer. The Extracellular portion of the chain corresponds to 120 to 140 (TGAKVFQWMKWCNRFTRFCFQ). Residues 141-161 (IGGALTCGYIASVLMVMISFI) traverse the membrane as a helical segment. Over 162–181 (SAFNLFRLYSPKHFLRLKGT) the chain is Cytoplasmic.

The protein belongs to the Casparian strip membrane proteins (CASP) family. As to quaternary structure, homodimer and heterodimers.

It localises to the cell membrane. The polypeptide is CASP-like protein 2C1 (Populus trichocarpa (Western balsam poplar)).